A 346-amino-acid polypeptide reads, in one-letter code: Holliday junction branch migration complex subunit RuvB (346 aa).

The large ATPase domain (RuvB-L) stretch occupies residues 1–182 (MSERLVTSNE…LGVLCSMEYY (182 aa)). ATP-binding positions include leucine 21, arginine 22, glycine 63, lysine 66, threonine 67, threonine 68, 129-131 (EDY), arginine 172, tyrosine 182, and arginine 219. Residue threonine 67 participates in Mg(2+) binding. The interval 183 to 253 (TDEQLKEIII…AAKKSLEILE (71 aa)) is small ATPAse domain (RuvB-S). The tract at residues 256–346 (GEGFDRIDNK…DSKQCTLFEK (91 aa)) is head domain (RuvB-H). 2 residues coordinate DNA: arginine 311 and arginine 316.

This sequence belongs to the RuvB family. As to quaternary structure, homohexamer. Forms an RuvA(8)-RuvB(12)-Holliday junction (HJ) complex. HJ DNA is sandwiched between 2 RuvA tetramers; dsDNA enters through RuvA and exits via RuvB. An RuvB hexamer assembles on each DNA strand where it exits the tetramer. Each RuvB hexamer is contacted by two RuvA subunits (via domain III) on 2 adjacent RuvB subunits; this complex drives branch migration. In the full resolvosome a probable DNA-RuvA(4)-RuvB(12)-RuvC(2) complex forms which resolves the HJ.

The protein localises to the cytoplasm. It carries out the reaction ATP + H2O = ADP + phosphate + H(+). The RuvA-RuvB-RuvC complex processes Holliday junction (HJ) DNA during genetic recombination and DNA repair, while the RuvA-RuvB complex plays an important role in the rescue of blocked DNA replication forks via replication fork reversal (RFR). RuvA specifically binds to HJ cruciform DNA, conferring on it an open structure. The RuvB hexamer acts as an ATP-dependent pump, pulling dsDNA into and through the RuvAB complex. RuvB forms 2 homohexamers on either side of HJ DNA bound by 1 or 2 RuvA tetramers; 4 subunits per hexamer contact DNA at a time. Coordinated motions by a converter formed by DNA-disengaged RuvB subunits stimulates ATP hydrolysis and nucleotide exchange. Immobilization of the converter enables RuvB to convert the ATP-contained energy into a lever motion, pulling 2 nucleotides of DNA out of the RuvA tetramer per ATP hydrolyzed, thus driving DNA branch migration. The RuvB motors rotate together with the DNA substrate, which together with the progressing nucleotide cycle form the mechanistic basis for DNA recombination by continuous HJ branch migration. Branch migration allows RuvC to scan DNA until it finds its consensus sequence, where it cleaves and resolves cruciform DNA. This Clostridium perfringens (strain 13 / Type A) protein is Holliday junction branch migration complex subunit RuvB.